The chain runs to 144 residues: Large ribosomal subunit protein uL11 (144 aa).

The protein belongs to the universal ribosomal protein uL11 family. In terms of assembly, part of the ribosomal stalk of the 50S ribosomal subunit. Interacts with L10 and the large rRNA to form the base of the stalk. L10 forms an elongated spine to which L12 dimers bind in a sequential fashion forming a multimeric L10(L12)X complex. In terms of processing, one or more lysine residues are methylated.

Its function is as follows. Forms part of the ribosomal stalk which helps the ribosome interact with GTP-bound translation factors. This is Large ribosomal subunit protein uL11 from Neisseria meningitidis serogroup B (strain ATCC BAA-335 / MC58).